The following is a 291-amino-acid chain: Secreted effector protein PipB (291 aa).

Pentapeptide repeat domains are found at residues 154 to 193 (LNLRGVNLAHKDFQGEDLSKIDASNADFRETTLSNVNLVG) and 199 to 238 (ANLHAVNLMGSNMTKANLTHADLTCANMSGVNLTAAILFG).

It localises to the secreted. The protein resides in the host membrane. Functionally, effector proteins function to alter host cell physiology and promote bacterial survival in host tissues. Does not appear to be required for the formation or the maintenance of either Salmonella-containing vacuole (SCV) or the Salmonella-induced filaments (Sifs). Not required for intracellular replication in phagocytic cells. This is Secreted effector protein PipB (pipB) from Salmonella typhimurium (strain LT2 / SGSC1412 / ATCC 700720).